We begin with the raw amino-acid sequence, 320 residues long: Adhesin MafA 1 (320 aa).

The N-terminal stretch at 1 to 18 (MQARLLIPILFSVFILSA) is a signal peptide. C19 carries the N-palmitoyl cysteine lipid modification. A lipid anchor (S-diacylglycerol cysteine) is attached at C19. A disordered region spans residues 288 to 320 (HMGNSAPSVEADNSHEGYGYSDEAVRRHRQGQP).

Belongs to the MafA family.

It is found in the cell outer membrane. In Neisseria meningitidis serogroup A / serotype 4A (strain DSM 15465 / Z2491), this protein is Adhesin MafA 1 (mafA1).